Here is a 320-residue protein sequence, read N- to C-terminus: o-succinylbenzoate synthase (320 aa).

Lys-133 functions as the Proton donor in the catalytic mechanism. Mg(2+) contacts are provided by Asp-161, Glu-190, and Asp-213. The Proton acceptor role is filled by Lys-235.

It belongs to the mandelate racemase/muconate lactonizing enzyme family. MenC type 1 subfamily. The cofactor is a divalent metal cation.

It carries out the reaction (1R,6R)-6-hydroxy-2-succinyl-cyclohexa-2,4-diene-1-carboxylate = 2-succinylbenzoate + H2O. It functions in the pathway quinol/quinone metabolism; 1,4-dihydroxy-2-naphthoate biosynthesis; 1,4-dihydroxy-2-naphthoate from chorismate: step 4/7. The protein operates within quinol/quinone metabolism; menaquinone biosynthesis. In terms of biological role, converts 2-succinyl-6-hydroxy-2,4-cyclohexadiene-1-carboxylate (SHCHC) to 2-succinylbenzoate (OSB). The sequence is that of o-succinylbenzoate synthase from Citrobacter koseri (strain ATCC BAA-895 / CDC 4225-83 / SGSC4696).